The primary structure comprises 1400 residues: MNQEIMNLFNPTTPAQVFDQIRISIASPEKILSWSYGEIKKPETINYRTFKPERDGLFCARIFGPIKDYECLCGKYKRMKYKGIICEKCSVEVTLSRVRRERMGHIELAAPVAHIWFLKSLPSRIGQLLDMTLKDLERILYFEYYVVLEPGLTDLKERQLLSEEEYLRAQDQYGQDSFTAMIGAEAIRELLKGLELEKIDAQLRAEMAETDSDIKHKKLAKRLKIVEAFRYSGNKPEWMILTVVPVIPPDLRPLVPLDGGRFATSDLNDLYRRVINRNNRLKRLMELRAPDIIIRNEKRMLQEAVDALFDNGRRGRVITGANKRPLKSLADMLKGKQGRFRQNLLGKRVDYSGRSVIVVGPELKLHQCGLPKKMALELFKPFIYSRLDAKGLSTTVKQAKKLVEKERPEVWDILDEVIREHPVLLNRAPTLHRLGIQAFEPVLIEGKAIQLHPLVCSAFNADFDGDQMAVHVPLSLEAQLEARVLMMSTNNILHPANGQPIIVPSQDIVLGLYYLSIMREGLPGEGKVFADLAELEHALYSKVIHLHTKIKYRWHWVNEEGENTVRLLETTAGRILLGQVLPKSPKLPFDVINKLMTKREISGVIDQVYRHCGQKETVIFCDRIMALGFFNAFKAGISFGKDDMVVPGSKWKIVDSTRTLAKDFEQQYNDGLITHGEKYNKVVDAWSKATEEIAKEMMKEISAVRKAPDGSEQQVNSIYMMAHSGARGSPAQMRQLAGMRGLMAKPSGEIIETPIISNFKEGLSVLEYFNSTHGARKGLADTALKTANSGYLTRRLVDVAQDCIITQADCGTSLGIKMRAIVDAGTVVASLGSRILGRTAGEDVRDPATNEIIVKRGDLMEERDVEAIHQAGVQEVKIRSALTCELVNGICGKCYGRDLARGTPVNHGEAVGVIAAQSIGEPGTQLTMRTFHIGGAAQINEQSVIESNFDGKIVIKNRAIARNGEGHNVAMVRNMVIAIVDPDGTERATHRIQYGARVHVDEGDMVKRGQRIAEWDPYTRPILTEVEGTIDFEDLIEDQSISETLDESTGIAKRIVIDWRSTRGGADLRPAIVIKGKDGKVLKLARGGDARYMLSVDAILSVDVGAQVKPGDILARISTESAKTRDITGGLPRVAELFEARRPKDAAIIAEIAGTIRFGRDYKNKRRLSIEPLDKNEEAREYLIPKGKHIHLQDGDVVEKGDFIVEGNPAPHDILAIKGIEELAAYLVNEIQEVYRLQGVLINDKHIEVIVRQMLQKIEITDQGDTDMISGEQVDKIEFNALNAKAVEEGKKPATGNPVLLGITKASLQTRSFFSAASFQETTRVLTEAAVNGKVDPLEGLKENVIVGRLIPAGTGASMAKIREVAVKRDRLILDEREKQAAIVPAAAPEAEPLSLPPAE.

Residues C71, C73, C86, and C89 each coordinate Zn(2+). D462, D464, and D466 together coordinate Mg(2+). 4 residues coordinate Zn(2+): C810, C884, C891, and C894.

Belongs to the RNA polymerase beta' chain family. The RNAP catalytic core consists of 2 alpha, 1 beta, 1 beta' and 1 omega subunit. When a sigma factor is associated with the core the holoenzyme is formed, which can initiate transcription. It depends on Mg(2+) as a cofactor. Zn(2+) serves as cofactor.

It carries out the reaction RNA(n) + a ribonucleoside 5'-triphosphate = RNA(n+1) + diphosphate. Functionally, DNA-dependent RNA polymerase catalyzes the transcription of DNA into RNA using the four ribonucleoside triphosphates as substrates. In Rhodopseudomonas palustris (strain TIE-1), this protein is DNA-directed RNA polymerase subunit beta'.